Reading from the N-terminus, the 294-residue chain is Nucleotide-binding protein CLJ_B3680 (294 aa).

Residue 8–15 (GLSGAGKT) coordinates ATP. 59–62 (DIRG) contributes to the GTP binding site.

It belongs to the RapZ-like family.

Its function is as follows. Displays ATPase and GTPase activities. The sequence is that of Nucleotide-binding protein CLJ_B3680 from Clostridium botulinum (strain 657 / Type Ba4).